The primary structure comprises 173 residues: Protein-export protein SecB (173 aa).

It belongs to the SecB family. Homotetramer, a dimer of dimers. One homotetramer interacts with 1 SecA dimer.

Its subcellular location is the cytoplasm. Functionally, one of the proteins required for the normal export of preproteins out of the cell cytoplasm. It is a molecular chaperone that binds to a subset of precursor proteins, maintaining them in a translocation-competent state. It also specifically binds to its receptor SecA. The polypeptide is Protein-export protein SecB (Novosphingobium aromaticivorans (strain ATCC 700278 / DSM 12444 / CCUG 56034 / CIP 105152 / NBRC 16084 / F199)).